The sequence spans 49 residues: Protein YdfW (49 aa).

Positions 16–49 are disordered; it reads PKADHPWLTRRTQSHQQVKPPKLPKKKPDPDKKD.

In terms of biological role, may be involved in H(2) production during fermentative growth. The sequence is that of Protein YdfW (ydfW) from Escherichia coli (strain K12).